The primary structure comprises 245 residues: Platelet-derived growth factor subunit B (245 aa).

Residues 1-20 (MNRCWALFLSLCCYLRLVSA) form the signal peptide. A propeptide spans 21 to 81 (EGDPIPEELY…ELESLSRGRR (61 aa)) (removed in mature form). N-linked (GlcNAc...) asparagine glycosylation occurs at asparagine 63. 3 disulfides stabilise this stretch: cysteine 101–cysteine 145, cysteine 134–cysteine 182, and cysteine 138–cysteine 184. Residues 195–245 (RSPGSSQEQRARTPQTRVTIRTVRVRRPPKGKHQKFKHTHDKKALKETLGA) constitute a propeptide, removed in mature form. Residues 220–235 (RRPPKGKHQKFKHTHD) show a composition bias toward basic residues. The segment at 220-245 (RRPPKGKHQKFKHTHDKKALKETLGA) is disordered. Positions 236–245 (KKALKETLGA) are enriched in basic and acidic residues.

Belongs to the PDGF/VEGF growth factor family. Antiparallel homodimer; disulfide-linked. Antiparallel heterodimer with PDGFA; disulfide-linked. The PDGFB homodimer interacts with PDGFRA and PDGFRB homodimers, and with heterodimers formed by PDGFRA and PDGFRB. The heterodimer composed of PDGFA and PDGFB interacts with PDGFRB homodimers, and with heterodimers formed by PDGFRA and PDGFRB. Interacts with XLKD1. Interacts with LRP1. Interacts with SORL1 (via the N-terminal ectodomain). Interacts with CD82; this interaction inhibits PDGFB-mediated signaling pathway.

It localises to the secreted. Functionally, growth factor that plays an essential role in the regulation of embryonic development, cell proliferation, cell migration, survival and chemotaxis. Potent mitogen for cells of mesenchymal origin. Required for normal proliferation and recruitment of pericytes and vascular smooth muscle cells in the central nervous system, skin, lung, heart and placenta. Required for normal blood vessel development, and for normal development of kidney glomeruli. Plays an important role in wound healing. Signaling is modulated by the formation of heterodimers with PDGFA. This Felis catus (Cat) protein is Platelet-derived growth factor subunit B (PDGFB).